Here is a 294-residue protein sequence, read N- to C-terminus: Acetyl-coenzyme A carboxylase carboxyl transferase subunit beta (294 aa).

Residues 29–294 form the CoA carboxyltransferase N-terminal domain; the sequence is LWEKCPECGQ…TQVVKLQTNA (266 aa). C33, C36, C52, and C55 together coordinate Zn(2+). The C4-type zinc-finger motif lies at 33-55; sequence CPECGQVVYRKDLIDNCSVCSNC.

This sequence belongs to the AccD/PCCB family. In terms of assembly, acetyl-CoA carboxylase is a heterohexamer composed of biotin carboxyl carrier protein (AccB), biotin carboxylase (AccC) and two subunits each of ACCase subunit alpha (AccA) and ACCase subunit beta (AccD). Zn(2+) is required as a cofactor.

The protein resides in the cytoplasm. The enzyme catalyses N(6)-carboxybiotinyl-L-lysyl-[protein] + acetyl-CoA = N(6)-biotinyl-L-lysyl-[protein] + malonyl-CoA. It functions in the pathway lipid metabolism; malonyl-CoA biosynthesis; malonyl-CoA from acetyl-CoA: step 1/1. Component of the acetyl coenzyme A carboxylase (ACC) complex. Biotin carboxylase (BC) catalyzes the carboxylation of biotin on its carrier protein (BCCP) and then the CO(2) group is transferred by the transcarboxylase to acetyl-CoA to form malonyl-CoA. This Prochlorococcus marinus (strain NATL2A) protein is Acetyl-coenzyme A carboxylase carboxyl transferase subunit beta.